The following is a 364-amino-acid chain: Alanine racemase (364 aa).

Lys-34 functions as the Proton acceptor; specific for D-alanine in the catalytic mechanism. Position 34 is an N6-(pyridoxal phosphate)lysine (Lys-34). Arg-129 contributes to the substrate binding site. The active-site Proton acceptor; specific for L-alanine is Tyr-259. Residue Met-307 coordinates substrate.

Belongs to the alanine racemase family. Pyridoxal 5'-phosphate serves as cofactor.

The enzyme catalyses L-alanine = D-alanine. It participates in amino-acid biosynthesis; D-alanine biosynthesis; D-alanine from L-alanine: step 1/1. Its function is as follows. Catalyzes the interconversion of L-alanine and D-alanine. May also act on other amino acids. In Coxiella burnetii (strain Dugway 5J108-111), this protein is Alanine racemase (alr).